The primary structure comprises 185 residues: Large ribosomal subunit protein uL5 (185 aa).

Belongs to the universal ribosomal protein uL5 family. In terms of assembly, part of the 50S ribosomal subunit; part of the 5S rRNA/L5/L18/L25 subcomplex. Contacts the 5S rRNA and the P site tRNA. Forms a bridge to the 30S subunit in the 70S ribosome.

Functionally, this is one of the proteins that bind and probably mediate the attachment of the 5S RNA into the large ribosomal subunit, where it forms part of the central protuberance. In the 70S ribosome it contacts protein S13 of the 30S subunit (bridge B1b), connecting the 2 subunits; this bridge is implicated in subunit movement. Contacts the P site tRNA; the 5S rRNA and some of its associated proteins might help stabilize positioning of ribosome-bound tRNAs. This Rhodopseudomonas palustris (strain BisB18) protein is Large ribosomal subunit protein uL5.